The primary structure comprises 279 residues: Pantothenate synthetase (279 aa).

26-33 (MGNLHEGH) contacts ATP. The Proton donor role is filled by H33. Q57 lines the (R)-pantoate pocket. Q57 is a beta-alanine binding site. 144–147 (GKKD) is a binding site for ATP. Q150 provides a ligand contact to (R)-pantoate. ATP is bound by residues V173 and 181–184 (LSSR).

This sequence belongs to the pantothenate synthetase family. Homodimer.

The protein resides in the cytoplasm. It catalyses the reaction (R)-pantoate + beta-alanine + ATP = (R)-pantothenate + AMP + diphosphate + H(+). The protein operates within cofactor biosynthesis; (R)-pantothenate biosynthesis; (R)-pantothenate from (R)-pantoate and beta-alanine: step 1/1. Functionally, catalyzes the condensation of pantoate with beta-alanine in an ATP-dependent reaction via a pantoyl-adenylate intermediate. The sequence is that of Pantothenate synthetase from Burkholderia lata (strain ATCC 17760 / DSM 23089 / LMG 22485 / NCIMB 9086 / R18194 / 383).